We begin with the raw amino-acid sequence, 396 residues long: Putative 3-phosphoinositide-dependent protein kinase 2 (396 aa).

A compositionally biased stretch (polar residues) spans 1 to 11 (MVRTQTESSTP). A disordered region spans residues 1-53 (MVRTQTESSTPPGIPGGSRQGPAMDGTAAEPRPGAGSLQHAQPPPQPRKKRPE). The Protein kinase domain maps to 55–315 (FKFGKILGEG…YGPLKAHPFF (261 aa)). ATP-binding positions include 65–67 (SFS) and K84. The interval 86-130 (LEKRHIIKENKVPYVTRERDVMSRLDHPFFVKLYFTFQDDEKLYF) is PIF-pocket. ATP-binding positions include 133 to 135 (SYA) and E139. D178 (proton acceptor) is an active-site residue. E182 and D196 together coordinate ATP.

This sequence belongs to the protein kinase superfamily. AGC Ser/Thr protein kinase family. PDPK1 subfamily. Phosphorylated on tyrosine and serine/threonine.

It localises to the cytoplasm. It is found in the membrane. It carries out the reaction L-seryl-[protein] + ATP = O-phospho-L-seryl-[protein] + ADP + H(+). The catalysed reaction is L-threonyl-[protein] + ATP = O-phospho-L-threonyl-[protein] + ADP + H(+). Phosphorylates and activates not only PKB/AKT, but also PKA, PKC-zeta, RPS6KA1 and RPS6KB1. May play a general role in signaling processes and in development. The protein is Putative 3-phosphoinositide-dependent protein kinase 2 of Homo sapiens (Human).